The sequence spans 248 residues: B-box zinc finger protein 24 (248 aa).

Residues cysteine 5, cysteine 8, cysteine 28, histidine 33, cysteine 57, cysteine 60, cysteine 80, and histidine 85 each contribute to the Zn(2+) site. The B box-type 1; atypical zinc finger occupies 5–47; it reads CDVCEKAPATVICCADEAALCPQCDIEIHAANKLASKHQRLHL. The segment at 57–99 adopts a B box-type 2; atypical zinc-finger fold; it reads CDICQEKAAFIFCVEDRALLCRDCDESIHVANSRSANHQRFLA. Residues 115–148 form a disordered region; that stretch reads IEKNQPEPSNNQQKANQIPAKSTSQQQQQPSSAT. The span at 120–130 shows a compositional bias: polar residues; sequence PEPSNNQQKAN. Residues 131-148 are compositionally biased toward low complexity; it reads QIPAKSTSQQQQQPSSAT. Positions 226 to 229 match the Nuclear localization signal motif; that stretch reads KKPR. The interval 236–248 is interaction with COP1; sequence DDDEEHFIVPDLG.

In terms of assembly, interacts with COP1 WD40 domain. Interacts with HY5 and HYH. Interacts with RCD1 and TRP4. COP1-mediated ubiquitination and subsequent proteasomal degradation of BBX24/STO occurs in the dark. In terms of tissue distribution, high expression in leaves and lower in roots and flowers.

The protein resides in the nucleus. In terms of biological role, acts as a negative regulator of seedling photomorphogenesis and light-regulated inhibition of hypocotyl elongation. BBX24/STO and BBX25/STH function as transcriptional corepressors of HY5 activity, leading to the down-regulation of BBX22 expression. BBX24/STO acts additively with BBX25/STH during de-etiolation and the hypocotyl shade avoidance response. Functions as a negative regulator of photomorphogenic UV-B responses by interacting with both COP1 and HY5. May act as a transcription factor in the salt-stress response. This chain is B-box zinc finger protein 24, found in Arabidopsis thaliana (Mouse-ear cress).